Reading from the N-terminus, the 635-residue chain is BTB/POZ domain-containing protein SETH6 (635 aa).

Residues 39-104 (SDLTIEVGSA…CYGVGVQYNS (66 aa)) form the BTB domain. The NPH3 domain maps to 206–494 (DWWGRSLPIL…VQVLFYEQTR (289 aa)). A Phosphotyrosine modification is found at Y435. Positions 604-635 (QSVASSGKKHTEEKTNSERRFMFQKRRCHSVS) are disordered. Positions 612–624 (KHTEEKTNSERRF) are enriched in basic and acidic residues. Over residues 625–635 (MFQKRRCHSVS) the composition is skewed to basic residues.

Belongs to the NPH3 family.

Its pathway is protein modification; protein ubiquitination. Functionally, may act as a substrate-specific adapter of an E3 ubiquitin-protein ligase complex (CUL3-RBX1-BTB) which mediates the ubiquitination and subsequent proteasomal degradation of target proteins. The protein is BTB/POZ domain-containing protein SETH6 (SETH6) of Arabidopsis thaliana (Mouse-ear cress).